The sequence spans 393 residues: Elongation factor Tu (393 aa).

The tr-type G domain maps to lysine 10 to valine 203. Residues glycine 19–threonine 26 are G1. Glycine 19–threonine 26 provides a ligand contact to GTP. Threonine 26 contacts Mg(2+). The tract at residues glycine 60 to serine 64 is G2. The G3 stretch occupies residues aspartate 81 to glycine 84. GTP-binding positions include aspartate 81–histidine 85 and asparagine 136–aspartate 139. Residues asparagine 136–aspartate 139 are G4. The segment at serine 173–leucine 175 is G5.

This sequence belongs to the TRAFAC class translation factor GTPase superfamily. Classic translation factor GTPase family. EF-Tu/EF-1A subfamily. In terms of assembly, monomer.

It is found in the cytoplasm. The catalysed reaction is GTP + H2O = GDP + phosphate + H(+). Its function is as follows. GTP hydrolase that promotes the GTP-dependent binding of aminoacyl-tRNA to the A-site of ribosomes during protein biosynthesis. The polypeptide is Elongation factor Tu (Chlorobium chlorochromatii (strain CaD3)).